We begin with the raw amino-acid sequence, 84 residues long: Large ribosomal subunit protein bL27 (84 aa).

It belongs to the bacterial ribosomal protein bL27 family.

The chain is Large ribosomal subunit protein bL27 from Campylobacter lari (strain RM2100 / D67 / ATCC BAA-1060).